We begin with the raw amino-acid sequence, 442 residues long: Cell cycle checkpoint control protein RAD9B (442 aa).

2 disordered regions span residues 370 to 392 (EVPESDGNLSEVPESSVSDTEDV) and 422 to 442 (QSLATASGSEEDMNNGSFSTF). Ser-387 carries the post-translational modification Phosphoserine.

This sequence belongs to the rad9 family. As to quaternary structure, interacts with HUS1, HUS1B, RAD1, RAD9A and RAD17.

This chain is Cell cycle checkpoint control protein RAD9B (RAD9B), found in Bos taurus (Bovine).